A 294-amino-acid chain; its full sequence is Transmembrane protein 178B (294 aa).

Positions 1–23 (MAAGRLLLYTGLSLALCALGMLA) are cleaved as a signal peptide. Asn-148 and Asn-152 each carry an N-linked (GlcNAc...) asparagine glycan. A run of 3 helical transmembrane segments spans residues 172–192 (AGFM…GVLG), 206–226 (LLFL…VAGI), and 252–272 (MFCA…CTLA).

Belongs to the TMEM178 family.

It localises to the membrane. This chain is Transmembrane protein 178B (TMEM178B), found in Homo sapiens (Human).